Here is a 104-residue protein sequence, read N- to C-terminus: UPF0145 protein TM1040_1243 (104 aa).

Belongs to the UPF0145 family.

The chain is UPF0145 protein TM1040_1243 from Ruegeria sp. (strain TM1040) (Silicibacter sp.).